The sequence spans 2582 residues: Chromodomain-helicase-DNA-binding protein 8 (2582 aa).

Disordered regions lie at residues 22 to 111 (DDSF…PVLQ), 136 to 155 (MGVS…PSQS), 253 to 283 (VKGS…TQGE), and 349 to 377 (QKIQ…PLTL). Composition is skewed to polar residues over residues 42–51 (SLDSLDQMNQ), 94–111 (DYTT…PVLQ), and 141–155 (TGVS…PSQS). The segment covering 255-267 (GSAPAGNPGAAGP) has biased composition (low complexity). Residues 355-372 (PQPPSSQPQPQPQPPPSA) are compositionally biased toward pro residues. S434 carries the post-translational modification Phosphoserine. Disordered stretches follow at residues 475 to 585 (RARG…VKRK) and 598 to 617 (DEEE…PILP). Over residues 495-518 (RPEEEGEKKRRKKSSGERLKEEKP) the composition is skewed to basic and acidic residues. Residues S555 and S564 each carry the phosphoserine modification. The segment covering 574–585 (QKRRSNRQVKRK) has biased composition (basic residues). A Glycyl lysine isopeptide (Lys-Gly) (interchain with G-Cter in SUMO) cross-link involves residue K611. 2 Chromo domains span residues 644-711 (AIVD…AQMR) and 726-792 (VEVD…RVNR). The region spanning 825 to 999 (LFNWYNRQNC…FSLLHFLEPS (175 aa)) is the Helicase ATP-binding domain. An ATP-binding site is contributed by 838–845 (DEMGLGKT). A DEAH box motif is present at residues 950-953 (DEAH). The Helicase C-terminal domain occupies 1139–1290 (LIDKLLPKLK…KAVLQSMSGR (152 aa)). Residues S1422 and S1426 each carry the phosphoserine modification. The segment at 1694 to 1715 (EDPEYKPLQGPPKDPDDEGDPL) is disordered. The segment at 1791-2304 (IARREKQQRW…LVELEVECME (514 aa)) is interaction with FAM124B. Phosphoserine is present on residues S1978 and S1980. Residues 1990–2019 (QCTSRTASPSPLRPDAPVEKSPEESTVQVP) form a disordered region. Position 1995 is a phosphothreonine (T1995). A phosphoserine mark is found at S1997, S1999, and S2010. Residue K2027 forms a Glycyl lysine isopeptide (Lys-Gly) (interchain with G-Cter in SUMO2) linkage. Phosphoserine is present on residues S2040, S2070, and S2072. Residues 2045–2120 (VRVGSSDTAP…RSRPKLYDEE (76 aa)) form a disordered region. Positions 2065 to 2074 (EDEDDSDSEL) are enriched in acidic residues. Residues 2077–2096 (SKLSPSSSSSSSSSSSSSST) are compositionally biased toward low complexity. Over residues 2104–2118 (EEKLTADRSRPKLYD) the composition is skewed to basic and acidic residues. A phosphoserine mark is found at S2184, S2202, and S2204. Positions 2187 to 2233 (VTAGGILGPGNHLLDSPSLTPGEDGDSPVPTPRSGSAASMAEEEASA) are disordered. T2206 carries the phosphothreonine modification. S2213 bears the Phosphoserine mark. T2217 bears the Phosphothreonine mark. The segment covering 2222–2233 (SAASMAEEEASA) has biased composition (low complexity). S2225 carries the phosphoserine modification. K2258 is covalently cross-linked (Glycyl lysine isopeptide (Lys-Gly) (interchain with G-Cter in SUMO2)). The interval 2486-2582 (HVDSSTMLHH…NSDSSEDADD (97 aa)) is disordered. A compositionally biased stretch (basic residues) spans 2493-2511 (LHHHHHHPHPHHHHHHHPG). A compositionally biased stretch (low complexity) spans 2514-2529 (TTGYPSSPATTTSGTA). A Phosphoserine modification is found at S2520. Over residues 2537-2551 (PEDDDEEEDEEDDDL) the composition is skewed to acidic residues.

The protein belongs to the SNF2/RAD54 helicase family. CHD8 subfamily. In terms of assembly, interacts with CTNNB1 and PIAS3. Component of some MLL1/MLL complex, at least composed of the core components KMT2A/MLL1, ASH2L, HCFC1/HCF1, WDR5 and RBBP5, as well as the facultative components BACC1, CHD8, E2F6, HSP70, INO80C, KANSL1, LAS1L, MAX, MCRS1, MGA, KAT8/MOF, PELP1, PHF20, PRP31, RING2, RUVB1/TIP49A, RUVB2/TIP49B, SENP3, TAF1, TAF4, TAF6, TAF7, TAF9 and TEX10. Interacts with CHD7. Interacts with FAM124B. Interacts with p53/TP53 and histone H1. Interacts with CTCF. Interacts with TLK2. Interacts with HNRNPL in an RNA-dependent manner. In terms of processing, sumoylated.

It localises to the nucleus. The catalysed reaction is ATP + H2O = ADP + phosphate + H(+). ATP-dependent chromatin-remodeling factor, it slides nucleosomes along DNA; nucleosome sliding requires ATP. Acts as a transcription repressor by remodeling chromatin structure and recruiting histone H1 to target genes. Suppresses p53/TP53-mediated apoptosis by recruiting histone H1 and preventing p53/TP53 transactivation activity. Acts as a negative regulator of Wnt signaling pathway by regulating beta-catenin (CTNNB1) activity. Negatively regulates CTNNB1-targeted gene expression by being recruited specifically to the promoter regions of several CTNNB1 responsive genes. Involved in both enhancer blocking and epigenetic remodeling at chromatin boundary via its interaction with CTCF. Acts as a suppressor of STAT3 activity by suppressing the LIF-induced STAT3 transcriptional activity. Also acts as a transcription activator via its interaction with ZNF143 by participating in efficient U6 RNA polymerase III transcription. Regulates alternative splicing of a core group of genes involved in neuronal differentiation, cell cycle and DNA repair. Enables H3K36me3-coupled transcription elongation and co-transcriptional RNA processing likely via interaction with HNRNPL. The polypeptide is Chromodomain-helicase-DNA-binding protein 8 (Mus musculus (Mouse)).